We begin with the raw amino-acid sequence, 483 residues long: Phosphoglucosamine mutase (483 aa).

Serine 131 functions as the Phosphoserine intermediate in the catalytic mechanism. Mg(2+)-binding residues include serine 131, aspartate 272, aspartate 274, and aspartate 276. Phosphoserine is present on serine 131.

It belongs to the phosphohexose mutase family. Mg(2+) is required as a cofactor. Activated by phosphorylation.

It catalyses the reaction alpha-D-glucosamine 1-phosphate = D-glucosamine 6-phosphate. Functionally, catalyzes the conversion of glucosamine-6-phosphate to glucosamine-1-phosphate. This is Phosphoglucosamine mutase from Magnetococcus marinus (strain ATCC BAA-1437 / JCM 17883 / MC-1).